The primary structure comprises 130 residues: MASEKVTALLEELKGLTLVEAAELAKEMEEVFGVSAAAPVMVAGVAAAGDAPAAAAEEQTEFTVILKGAPADKKIAIIKAVREVVAGLGLKEAKDLVEGAPKPVKEGVSKEEAEAAKAALAAAGAEIEIK.

Belongs to the bacterial ribosomal protein bL12 family. Homodimer. Part of the ribosomal stalk of the 50S ribosomal subunit. Forms a multimeric L10(L12)X complex, where L10 forms an elongated spine to which 2 to 4 L12 dimers bind in a sequential fashion. Binds GTP-bound translation factors.

In terms of biological role, forms part of the ribosomal stalk which helps the ribosome interact with GTP-bound translation factors. Is thus essential for accurate translation. The chain is Large ribosomal subunit protein bL12 from Herpetosiphon aurantiacus (strain ATCC 23779 / DSM 785 / 114-95).